Consider the following 335-residue polypeptide: Agamous-like MADS-box protein AGL104 (335 aa).

Residues Met-1–Thr-61 enclose the MADS-box domain. The stretch at Ser-124 to Glu-151 forms a coiled coil. The interval Met-302 to Gln-335 is disordered. Residues Gln-317 to Thr-327 are compositionally biased toward basic and acidic residues.

Forms heterodimers with AGL30 and AGL65. As to expression, expressed in pollen.

The protein resides in the nucleus. In terms of biological role, probable transcription factor that forms heterodimers with the MADS-box proteins AGL30 and AGL65 and is involved in the regulation of pollen maturation at the late stages of pollen development and pollen tube growth. The polypeptide is Agamous-like MADS-box protein AGL104 (Arabidopsis thaliana (Mouse-ear cress)).